We begin with the raw amino-acid sequence, 544 residues long: CTP synthase (544 aa).

The interval 1 to 266 (MSTKFIFVTG…DYFVCRRFHL (266 aa)) is amidoligase domain. Ser-14 lines the CTP pocket. Residue Ser-14 coordinates UTP. ATP contacts are provided by residues 15–20 (SLGKGI) and Asp-72. Residues Asp-72 and Glu-140 each coordinate Mg(2+). Residues 147–149 (DIE), 187–192 (KTKPTQ), and Lys-223 contribute to the CTP site. UTP is bound by residues 187 to 192 (KTKPTQ) and Lys-223. A Glutamine amidotransferase type-1 domain is found at 291–542 (TIGMVGKYIE…VAAAHIHQKA (252 aa)). Gly-352 provides a ligand contact to L-glutamine. The active-site Nucleophile; for glutamine hydrolysis is Cys-379. Residues 380-383 (LGMQ), Glu-403, and Arg-470 contribute to the L-glutamine site. Catalysis depends on residues His-515 and Glu-517.

This sequence belongs to the CTP synthase family. In terms of assembly, homotetramer.

It carries out the reaction UTP + L-glutamine + ATP + H2O = CTP + L-glutamate + ADP + phosphate + 2 H(+). The catalysed reaction is L-glutamine + H2O = L-glutamate + NH4(+). It catalyses the reaction UTP + NH4(+) + ATP = CTP + ADP + phosphate + 2 H(+). It functions in the pathway pyrimidine metabolism; CTP biosynthesis via de novo pathway; CTP from UDP: step 2/2. With respect to regulation, allosterically activated by GTP, when glutamine is the substrate; GTP has no effect on the reaction when ammonia is the substrate. The allosteric effector GTP functions by stabilizing the protein conformation that binds the tetrahedral intermediate(s) formed during glutamine hydrolysis. Inhibited by the product CTP, via allosteric rather than competitive inhibition. Functionally, catalyzes the ATP-dependent amination of UTP to CTP with either L-glutamine or ammonia as the source of nitrogen. Regulates intracellular CTP levels through interactions with the four ribonucleotide triphosphates. This is CTP synthase from Pseudoalteromonas translucida (strain TAC 125).